We begin with the raw amino-acid sequence, 304 residues long: UDP-N-acetylenolpyruvoylglucosamine reductase (304 aa).

Residues 31–196 enclose the FAD-binding PCMH-type domain; sequence KVGGPADYLA…ISAKFNLKPG (166 aa). Residue arginine 175 is part of the active site. The active-site Proton donor is serine 225. The active site involves glutamate 295.

Belongs to the MurB family. FAD is required as a cofactor.

The protein resides in the cytoplasm. It carries out the reaction UDP-N-acetyl-alpha-D-muramate + NADP(+) = UDP-N-acetyl-3-O-(1-carboxyvinyl)-alpha-D-glucosamine + NADPH + H(+). It functions in the pathway cell wall biogenesis; peptidoglycan biosynthesis. Its function is as follows. Cell wall formation. This Streptococcus thermophilus (strain ATCC BAA-491 / LMD-9) protein is UDP-N-acetylenolpyruvoylglucosamine reductase.